The chain runs to 320 residues: Glyoxylate/hydroxypyruvate reductase B (320 aa).

Residues arginine 233 and glutamate 262 contribute to the active site. Catalysis depends on histidine 281, which acts as the Proton donor.

The protein belongs to the D-isomer specific 2-hydroxyacid dehydrogenase family. GhrB subfamily. Homodimer.

Its subcellular location is the cytoplasm. The catalysed reaction is glycolate + NADP(+) = glyoxylate + NADPH + H(+). The enzyme catalyses (R)-glycerate + NAD(+) = 3-hydroxypyruvate + NADH + H(+). It carries out the reaction (R)-glycerate + NADP(+) = 3-hydroxypyruvate + NADPH + H(+). In terms of biological role, catalyzes the NADPH-dependent reduction of glyoxylate and hydroxypyruvate into glycolate and glycerate, respectively. This chain is Glyoxylate/hydroxypyruvate reductase B, found in Pectobacterium atrosepticum (strain SCRI 1043 / ATCC BAA-672) (Erwinia carotovora subsp. atroseptica).